The following is a 432-amino-acid chain: uncharacterized protein (432 aa).

2 SIS domains span residues 105–244 (WLTE…DLVS) and 277–422 (CDKK…VDLP).

This is an uncharacterized protein from Saccharomyces cerevisiae (strain Lalvin EC1118 / Prise de mousse) (Baker's yeast).